Reading from the N-terminus, the 178-residue chain is Adenine phosphoribosyltransferase (178 aa).

It belongs to the purine/pyrimidine phosphoribosyltransferase family. In terms of assembly, homodimer.

Its subcellular location is the cytoplasm. It carries out the reaction AMP + diphosphate = 5-phospho-alpha-D-ribose 1-diphosphate + adenine. It functions in the pathway purine metabolism; AMP biosynthesis via salvage pathway; AMP from adenine: step 1/1. Catalyzes a salvage reaction resulting in the formation of AMP, that is energically less costly than de novo synthesis. The polypeptide is Adenine phosphoribosyltransferase (Novosphingobium aromaticivorans (strain ATCC 700278 / DSM 12444 / CCUG 56034 / CIP 105152 / NBRC 16084 / F199)).